We begin with the raw amino-acid sequence, 239 residues long: Succinate dehydrogenase [ubiquinone] iron-sulfur subunit (239 aa).

Residues 11-100 (FKVYRWNPDK…EMKIYPLPHM (90 aa)) enclose the 2Fe-2S ferredoxin-type domain. The [2Fe-2S] cluster site is built by Cys-61, Cys-66, Cys-69, and Cys-81. A 4Fe-4S ferredoxin-type domain is found at 141–171 (DREKLDGLYECVLCACCSTSCPSYWWNSDKY). [4Fe-4S] cluster contacts are provided by Cys-151, Cys-154, and Cys-157. [3Fe-4S] cluster is bound at residue Cys-161. Residue Trp-166 participates in a ubiquinone binding. [3Fe-4S] cluster contacts are provided by Cys-208 and Cys-214. Cys-218 serves as a coordination point for [4Fe-4S] cluster.

Belongs to the succinate dehydrogenase/fumarate reductase iron-sulfur protein family. Component of complex II composed of four subunits: a flavoprotein (FP), an iron-sulfur protein (IP), and a cytochrome b composed of a large and a small subunit. [2Fe-2S] cluster serves as cofactor. It depends on [3Fe-4S] cluster as a cofactor. The cofactor is [4Fe-4S] cluster.

It is found in the mitochondrion inner membrane. It catalyses the reaction a quinone + succinate = fumarate + a quinol. The protein operates within carbohydrate metabolism; tricarboxylic acid cycle; fumarate from succinate (eukaryal route): step 1/1. In terms of biological role, iron-sulfur protein (IP) subunit of succinate dehydrogenase (SDH) that is involved in complex II of the mitochondrial electron transport chain and is responsible for transferring electrons from succinate to ubiquinone (coenzyme Q). The sequence is that of Succinate dehydrogenase [ubiquinone] iron-sulfur subunit (SDH2) from Reclinomonas americana.